The sequence spans 121 residues: Ribonuclease P protein component (121 aa).

The protein belongs to the RnpA family. Consists of a catalytic RNA component (M1 or rnpB) and a protein subunit.

The catalysed reaction is Endonucleolytic cleavage of RNA, removing 5'-extranucleotides from tRNA precursor.. Its function is as follows. RNaseP catalyzes the removal of the 5'-leader sequence from pre-tRNA to produce the mature 5'-terminus. It can also cleave other RNA substrates such as 4.5S RNA. The protein component plays an auxiliary but essential role in vivo by binding to the 5'-leader sequence and broadening the substrate specificity of the ribozyme. The polypeptide is Ribonuclease P protein component (Geobacillus thermodenitrificans (strain NG80-2)).